The sequence spans 323 residues: Beta-ketoacyl-[acyl-carrier-protein] synthase III 1 (323 aa).

Residues Cys114 and His254 contribute to the active site. Residues 255-259 (QANLR) form an ACP-binding region. The active site involves Asn284.

This sequence belongs to the thiolase-like superfamily. FabH family. In terms of assembly, homodimer.

The protein resides in the cytoplasm. The catalysed reaction is malonyl-[ACP] + acetyl-CoA + H(+) = 3-oxobutanoyl-[ACP] + CO2 + CoA. It participates in lipid metabolism; fatty acid biosynthesis. Functionally, catalyzes the condensation reaction of fatty acid synthesis by the addition to an acyl acceptor of two carbons from malonyl-ACP. Catalyzes the first condensation reaction which initiates fatty acid synthesis and may therefore play a role in governing the total rate of fatty acid production. Possesses both acetoacetyl-ACP synthase and acetyl transacylase activities. Its substrate specificity determines the biosynthesis of branched-chain and/or straight-chain of fatty acids. The polypeptide is Beta-ketoacyl-[acyl-carrier-protein] synthase III 1 (Lactiplantibacillus plantarum (strain ATCC BAA-793 / NCIMB 8826 / WCFS1) (Lactobacillus plantarum)).